Reading from the N-terminus, the 375-residue chain is Putative F-box protein At1g12190 (375 aa).

The region spanning 1-46 (MACVKFPWELMEEILYRVPSLSLSRFKTVSKEWNTLLNDKTFIKKH) is the F-box domain.

In Arabidopsis thaliana (Mouse-ear cress), this protein is Putative F-box protein At1g12190.